Here is a 658-residue protein sequence, read N- to C-terminus: Endoplasmic reticulum mannosyl-oligosaccharide 1,2-alpha-mannosidase (658 aa).

At 1–50 (MYPPPAPPPAPHRDFISVTLSLGESYDNSKSRRRRSCWRKWKQLSRLQRN) the chain is on the cytoplasmic side. A helical; Signal-anchor for type II membrane protein membrane pass occupies residues 51–71 (VILFVLGFLILCGFLYSLHTA). Residues 72 to 658 (DQWKALSGRP…AHPLPIWAPA (587 aa)) are Lumenal-facing. Ser102 bears the Phosphoserine mark. A disordered region spans residues 123–142 (GPPHLQIRPPNTVSKDGMQD). The active-site Proton donor is the Glu289. Asp422 is an active-site residue. A disulfide bond links Cys486 and Cys515. Residue Glu529 is the Proton donor of the active site. Residue Glu558 is part of the active site. Residue Thr647 participates in Ca(2+) binding.

The protein belongs to the glycosyl hydrolase 47 family. Ca(2+) serves as cofactor.

It localises to the endoplasmic reticulum membrane. It carries out the reaction N(4)-(alpha-D-Man-(1-&gt;2)-alpha-D-Man-(1-&gt;2)-alpha-D-Man-(1-&gt;3)-[alpha-D-Man-(1-&gt;2)-alpha-D-Man-(1-&gt;3)-[alpha-D-Man-(1-&gt;2)-alpha-D-Man-(1-&gt;6)]-alpha-D-Man-(1-&gt;6)]-beta-D-Man-(1-&gt;4)-beta-D-GlcNAc-(1-&gt;4)-beta-D-GlcNAc)-L-asparaginyl-[protein] (N-glucan mannose isomer 9A1,2,3B1,2,3) + 4 H2O = N(4)-(alpha-D-Man-(1-&gt;3)-[alpha-D-Man-(1-&gt;3)-[alpha-D-Man-(1-&gt;6)]-alpha-D-Man-(1-&gt;6)]-beta-D-Man-(1-&gt;4)-beta-D-GlcNAc-(1-&gt;4)-beta-D-GlcNAc)-L-asparaginyl-[protein] (N-glucan mannose isomer 5A1,2) + 4 beta-D-mannose. It catalyses the reaction N(4)-(alpha-D-Man-(1-&gt;2)-alpha-D-Man-(1-&gt;2)-alpha-D-Man-(1-&gt;3)-[alpha-D-Man-(1-&gt;3)-[alpha-D-Man-(1-&gt;2)-alpha-D-Man-(1-&gt;6)]-alpha-D-Man-(1-&gt;6)]-beta-D-Man-(1-&gt;4)-beta-D-GlcNAc-(1-&gt;4)-beta-D-GlcNAc)-L-asparaginyl-[protein] (N-glucan mannose isomer 8A1,2,3B1,3) + 3 H2O = N(4)-(alpha-D-Man-(1-&gt;3)-[alpha-D-Man-(1-&gt;3)-[alpha-D-Man-(1-&gt;6)]-alpha-D-Man-(1-&gt;6)]-beta-D-Man-(1-&gt;4)-beta-D-GlcNAc-(1-&gt;4)-beta-D-GlcNAc)-L-asparaginyl-[protein] (N-glucan mannose isomer 5A1,2) + 3 beta-D-mannose. The protein operates within protein modification; protein glycosylation. Involved in glycoprotein quality control targeting of misfolded glycoproteins for degradation. It primarily trims a single alpha-1,2-linked mannose residue from Man(9)GlcNAc(2) to produce Man(8)GlcNAc(2), but at high enzyme concentrations, as found in the ER quality control compartment (ERQC), it further trims the carbohydrates to Man(5-6)GlcNAc(2). The protein is Endoplasmic reticulum mannosyl-oligosaccharide 1,2-alpha-mannosidase (Man1b1) of Mus musculus (Mouse).